Here is a 102-residue protein sequence, read N- to C-terminus: Small ribosomal subunit protein uS10 (102 aa).

Belongs to the universal ribosomal protein uS10 family. Part of the 30S ribosomal subunit.

Involved in the binding of tRNA to the ribosomes. This Opitutus terrae (strain DSM 11246 / JCM 15787 / PB90-1) protein is Small ribosomal subunit protein uS10.